The sequence spans 1297 residues: Phosphoribosylformylglycinamidine synthase (1297 aa).

Positions 305–324 (FPGAATGSGGEIRDEGATGR) are disordered. An ATP-binding site is contributed by 307–318 (GAATGSGGEIRD). Residues D679, E718, N722, and D886 each contribute to the Mg(2+) site. An ATP-binding site is contributed by S888. Residues 1044–1297 (IAVLREQGVN…LFRNARVFFK (254 aa)) enclose the Glutamine amidotransferase type-1 domain. C1137 acts as the Nucleophile in catalysis. Residues H1262 and E1264 contribute to the active site.

It in the N-terminal section; belongs to the FGAMS family. Monomer.

It localises to the cytoplasm. It carries out the reaction N(2)-formyl-N(1)-(5-phospho-beta-D-ribosyl)glycinamide + L-glutamine + ATP + H2O = 2-formamido-N(1)-(5-O-phospho-beta-D-ribosyl)acetamidine + L-glutamate + ADP + phosphate + H(+). The protein operates within purine metabolism; IMP biosynthesis via de novo pathway; 5-amino-1-(5-phospho-D-ribosyl)imidazole from N(2)-formyl-N(1)-(5-phospho-D-ribosyl)glycinamide: step 1/2. Its function is as follows. Phosphoribosylformylglycinamidine synthase involved in the purines biosynthetic pathway. Catalyzes the ATP-dependent conversion of formylglycinamide ribonucleotide (FGAR) and glutamine to yield formylglycinamidine ribonucleotide (FGAM) and glutamate. This is Phosphoribosylformylglycinamidine synthase from Mannheimia succiniciproducens (strain KCTC 0769BP / MBEL55E).